Reading from the N-terminus, the 248-residue chain is Tabinhibitin 10 (248 aa).

Residues 1–22 (MTLKRIFCAALALIVLQSVASA) form the signal peptide. Residues 66-208 (LQKTNWLRGV…NYKGAFHCSL (143 aa)) form the SCP domain. The Cell attachment site motif lies at 221 to 223 (RGD).

This sequence belongs to the CRISP family. As to expression, expressed in salivary glands.

It is found in the secreted. Inhibits platelet aggregation induced by all agonists tested (ADP, arachidonic acid, the thromboxane A2 analog U46619, thrombin, and snake venom snaclecs (TMVA that activates platelet through GPIB, and stejnulxin that specifically acts through GPVI (GP6))). May act by competing with fibrinogen for binding to glycoprotein IIb/IIIa (ITGA2B/ITGB3). The polypeptide is Tabinhibitin 10 (Tabanus yao (Horsefly)).